Here is a 262-residue protein sequence, read N- to C-terminus: MNNLERLRSENPLVICYTNDVVKNFTANGLLSLGASPAMSEAPEEAEDFTRMASALLINIGTLTRENEEDIIKIGKIANQQGTPIVFDPVAVGASTYRKNFCQRFLGEVNVTVIKGNASEILTLIDFNTTMKGTDSDSELDSVNIAKKAANTLNTAIVITGKDDIIAKNEKIIKLSNGSPLLTKITGAGCLLGGVLASFLFRNTQPSIDLLVEAVSVYNIAAEFAEQAPHVNGPSTFLSELLDQLYQMNDITYKNQVKKVEI.

Position 39 (methionine 39) interacts with substrate. The ATP site is built by lysine 115 and threonine 160. Substrate is bound at residue glycine 187.

The protein belongs to the Thz kinase family. The cofactor is Mg(2+).

It catalyses the reaction 5-(2-hydroxyethyl)-4-methylthiazole + ATP = 4-methyl-5-(2-phosphooxyethyl)-thiazole + ADP + H(+). It functions in the pathway cofactor biosynthesis; thiamine diphosphate biosynthesis; 4-methyl-5-(2-phosphoethyl)-thiazole from 5-(2-hydroxyethyl)-4-methylthiazole: step 1/1. Catalyzes the phosphorylation of the hydroxyl group of 4-methyl-5-beta-hydroxyethylthiazole (THZ). This is Hydroxyethylthiazole kinase from Staphylococcus epidermidis (strain ATCC 12228 / FDA PCI 1200).